Reading from the N-terminus, the 652-residue chain is DNA ligase (652 aa).

NAD(+) is bound by residues D29–D33, S78–L79, and E107. Residue K109 is the N6-AMP-lysine intermediate of the active site. The NAD(+) site is built by R130, E164, K278, and K302. 4 residues coordinate Zn(2+): C395, C398, C413, and C418. A BRCT domain is found at V577–L652.

It belongs to the NAD-dependent DNA ligase family. LigA subfamily. It depends on Mg(2+) as a cofactor. Mn(2+) serves as cofactor.

The enzyme catalyses NAD(+) + (deoxyribonucleotide)n-3'-hydroxyl + 5'-phospho-(deoxyribonucleotide)m = (deoxyribonucleotide)n+m + AMP + beta-nicotinamide D-nucleotide.. In terms of biological role, DNA ligase that catalyzes the formation of phosphodiester linkages between 5'-phosphoryl and 3'-hydroxyl groups in double-stranded DNA using NAD as a coenzyme and as the energy source for the reaction. It is essential for DNA replication and repair of damaged DNA. This Streptococcus pneumoniae (strain Hungary19A-6) protein is DNA ligase.